The primary structure comprises 1497 residues: Collagen alpha-2(V) chain (1497 aa).

The N-terminal stretch at 1–26 (MMANWVGARPLLILSVLLGYCVSIKA) is a signal peptide. One can recognise a VWFC domain in the interval 38–96 (IACTQHGQMYLNRDIWKPSPCQICVCDNGAILCDKIECPEVLNCANPITPTGECCPVCP). The tract at residues 103–1265 (TSFGRGRKGQ…PDDTNKTDPG (1163 aa)) is disordered. The Cell attachment site signature appears at 141–143 (RGD). Over residues 155-164 (PQGIDGEPGV) the composition is skewed to low complexity. Residues 168 to 180 (PGAPGPPGHPSHP) show a composition bias toward pro residues. Positions 210 to 225 (PGSVGPVGPRGPQGLQ) are enriched in low complexity. Residues 234–246 (AGPPGEPGEPGPM) show a composition bias toward pro residues. 4-hydroxyproline is present on residues P288, P291, and P294. Composition is skewed to low complexity over residues 320-338 (EAGP…PRGM) and 425-441 (TPGA…SGPP). The short motif at 504–506 (RGD) is the Cell attachment site element. Gly residues predominate over residues 550–559 (GPKGGQGDPG). Over residues 602–611 (SIGIRGQPGS) the composition is skewed to low complexity. 2 positions are modified to 4-hydroxyproline: P609 and P615. The span at 708-719 (RGERGNPGERGE) shows a compositional bias: basic and acidic residues. The span at 730-739 (GMAGGHGPDG) shows a compositional bias: gly residues. The span at 744-756 (PGPTGTIGDTGPP) shows a compositional bias: low complexity. The span at 774–785 (KGDRGGIGEKGA) shows a compositional bias: basic and acidic residues. Low complexity-rich tracts occupy residues 824-839 (PPGS…ENGP) and 878-891 (LAGS…HGVP). A compositionally biased stretch (gly residues) spans 892–901 (GLKGGRGTQG). Positions 917–927 (PPGPAGAPGPA) are enriched in pro residues. 3 consecutive short sequence motifs (cell attachment site) follow at residues 942–944 (RGD), 1065–1067 (RGD), and 1068–1070 (RGD). The segment covering 1061-1070 (AVGERGDRGD) has biased composition (basic and acidic residues). Residues 1091–1112 (APGDAGQRGEPGSRGPVGPPGR) are compositionally biased toward low complexity. Short sequence motifs (cell attachment site) lie at residues 1125-1127 (RGD) and 1134-1136 (RGD). The span at 1125-1139 (RGDKGDNGDRGDRGQ) shows a compositional bias: basic and acidic residues. 2 stretches are compositionally biased toward pro residues: residues 1169-1179 (PFGPRGPPGPV) and 1209-1224 (EGPP…PGPP). A propeptide spans 1228-1497 (TAALGDIMGH…GLDIGPVCFM (270 aa)) (C-terminal propeptide). N1260 carries N-linked (GlcNAc...) asparagine glycosylation. The Fibrillar collagen NC1 domain occupies 1264-1497 (PGIHVTLKSL…GLDIGPVCFM (234 aa)). Intrachain disulfides connect C1294–C1326, C1334–C1495, and C1403–C1448. Ca(2+) is bound by residues D1312, N1314, Q1315, and D1320. N-linked (GlcNAc...) asparagine glycosylation is present at N1398.

It belongs to the fibrillar collagen family. As to quaternary structure, trimers of two alpha 1(V) and one alpha 2(V) chains expressed in most tissues and trimers of one alpha 1(V), one alpha 2(V), and one alpha 3(V) chains with a more limited distribution of expression. Post-translationally, prolines at the third position of the tripeptide repeating unit (G-X-P) are hydroxylated in some or all of the chains. Probably 3-hydroxylated on prolines by LEPREL1. Hydroxylation on proline residues within the sequence motif, GXPG, is most likely to be 4-hydroxy as this fits the requirement for 4-hydroxylation in vertebrates.

The protein localises to the secreted. It localises to the extracellular space. It is found in the extracellular matrix. Functionally, type V collagen is a member of group I collagen (fibrillar forming collagen). It is a minor connective tissue component of nearly ubiquitous distribution. Type V collagen binds to DNA, heparan sulfate, thrombospondin, heparin, and insulin. Type V collagen is a key determinant in the assembly of tissue-specific matrices. The sequence is that of Collagen alpha-2(V) chain from Mus musculus (Mouse).